Reading from the N-terminus, the 251-residue chain is Ribosomal RNA small subunit methyltransferase G (251 aa).

Residues Gly74, Phe79, 125-126 (AE), and Arg144 each bind S-adenosyl-L-methionine. The disordered stretch occupies residues 224–251 (RPAGLPTQHPLGAIEGAPRVESEEPEEP).

The protein belongs to the methyltransferase superfamily. RNA methyltransferase RsmG family.

It is found in the cytoplasm. In terms of biological role, specifically methylates the N7 position of a guanine in 16S rRNA. The sequence is that of Ribosomal RNA small subunit methyltransferase G from Gloeobacter violaceus (strain ATCC 29082 / PCC 7421).